An 88-amino-acid polypeptide reads, in one-letter code: UPF0298 protein BC_3932 (88 aa).

The protein belongs to the UPF0298 family.

The protein localises to the cytoplasm. This Bacillus cereus (strain ATCC 14579 / DSM 31 / CCUG 7414 / JCM 2152 / NBRC 15305 / NCIMB 9373 / NCTC 2599 / NRRL B-3711) protein is UPF0298 protein BC_3932.